Here is a 208-residue protein sequence, read N- to C-terminus: Small ribosomal subunit protein uS4 (208 aa).

The interval 24–52 (GVKPFDVKTKKANKAPGQHGQARGGKQSE) is disordered. The S4 RNA-binding domain occupies 98–160 (SRLDNVVYRM…AKQQLRIKNA (63 aa)).

The protein belongs to the universal ribosomal protein uS4 family. Part of the 30S ribosomal subunit. Contacts protein S5. The interaction surface between S4 and S5 is involved in control of translational fidelity.

Functionally, one of the primary rRNA binding proteins, it binds directly to 16S rRNA where it nucleates assembly of the body of the 30S subunit. With S5 and S12 plays an important role in translational accuracy. This is Small ribosomal subunit protein uS4 from Acinetobacter baumannii (strain ATCC 17978 / DSM 105126 / CIP 53.77 / LMG 1025 / NCDC KC755 / 5377).